Consider the following 741-residue polypeptide: Pentatricopeptide repeat-containing protein At1g05670, mitochondrial (741 aa).

Residues 1-21 (MKKPFTGLLMKRGTLSSFRNF) constitute a mitochondrion transit peptide. 15 PPR repeats span residues 174 to 208 (DPRV…GLVL), 209 to 244 (SVDS…GVCW), 245 to 279 (NVAS…GYTP), 280 to 314 (DVIS…GLKP), 315 to 349 (NSYI…GILP), 350 to 384 (DTVV…DITP), 385 to 419 (DVLT…GLEP), 420 to 454 (DSVT…GCSP), 455 to 489 (NVVT…GLQP), 490 to 524 (NIFT…GLNA), 525 to 559 (DTVT…GLQP), 560 to 594 (TIVT…GIAP), 595 to 629 (NATT…GVGP), 630 to 664 (DGKT…GFSV), and 665 to 699 (SVST…GLAA).

The protein belongs to the PPR family. P subfamily.

The protein localises to the mitochondrion. This is Pentatricopeptide repeat-containing protein At1g05670, mitochondrial from Arabidopsis thaliana (Mouse-ear cress).